The following is a 356-amino-acid chain: Adenine deaminase (356 aa).

Zn(2+)-binding residues include His-23, His-25, and His-211. The active-site Proton donor is Glu-214. Residue Asp-292 participates in Zn(2+) binding. Position 293 (Asp-293) interacts with substrate.

Belongs to the metallo-dependent hydrolases superfamily. Adenosine and AMP deaminases family. Adenine deaminase type 2 subfamily. It depends on Zn(2+) as a cofactor.

It localises to the cytoplasm. It is found in the nucleus. The enzyme catalyses adenine + H2O + H(+) = hypoxanthine + NH4(+). Catalyzes the hydrolytic deamination of adenine to hypoxanthine. Plays an important role in the purine salvage pathway and in nitrogen catabolism. The polypeptide is Adenine deaminase (Candida albicans (strain SC5314 / ATCC MYA-2876) (Yeast)).